We begin with the raw amino-acid sequence, 381 residues long: Lipopolysaccharide 1,2-N-acetylglucosaminetransferase (381 aa).

Belongs to the glycosyltransferase group 1 family. Glycosyltransferase 4 subfamily.

It is found in the cell inner membrane. It catalyses the reaction UDP-N-acetyl-alpha-D-glucosamine + [lipopolysaccharide] = UDP + N-acetyl-alpha-D-glucosaminyl-[lipopolysaccharide].. The protein operates within bacterial outer membrane biogenesis; LPS core biosynthesis. Transferase involved in the biosynthesis of the core oligosaccharide region of lipopolysaccharide (LPS). Catalyzes the addition of the terminal N-acetyl-D-glucosamine (GlcNAc) group to the outer-core glucose II, the last step of the lipid A-core oligosaccharide biosynthesis. The protein is Lipopolysaccharide 1,2-N-acetylglucosaminetransferase of Salmonella typhimurium (strain LT2 / SGSC1412 / ATCC 700720).